A 291-amino-acid polypeptide reads, in one-letter code: N-acetylmannosamine kinase (291 aa).

ATP contacts are provided by residues 5–12 and 132–139; these read AIDIGGTK and GVGGGVVC. Residues histidine 156, cysteine 166, cysteine 168, and cysteine 173 each contribute to the Zn(2+) site.

The protein belongs to the ROK (NagC/XylR) family. NanK subfamily. Homodimer.

The enzyme catalyses an N-acyl-D-mannosamine + ATP = an N-acyl-D-mannosamine 6-phosphate + ADP + H(+). It functions in the pathway amino-sugar metabolism; N-acetylneuraminate degradation; D-fructose 6-phosphate from N-acetylneuraminate: step 2/5. Catalyzes the phosphorylation of N-acetylmannosamine (ManNAc) to ManNAc-6-P. The sequence is that of N-acetylmannosamine kinase from Salmonella heidelberg (strain SL476).